A 260-amino-acid chain; its full sequence is Pyridoxine 5'-phosphate synthase (260 aa).

3-amino-2-oxopropyl phosphate contacts are provided by Asn-10 and Arg-21. His-46 acts as the Proton acceptor in catalysis. The 1-deoxy-D-xylulose 5-phosphate site is built by Arg-48 and His-53. Residue Glu-76 is the Proton acceptor of the active site. 1-deoxy-D-xylulose 5-phosphate is bound at residue Thr-113. Catalysis depends on His-204, which acts as the Proton donor. 3-amino-2-oxopropyl phosphate is bound by residues Asp-205 and 227 to 228 (GH).

Belongs to the PNP synthase family. As to quaternary structure, homooctamer; tetramer of dimers.

The protein resides in the cytoplasm. The catalysed reaction is 3-amino-2-oxopropyl phosphate + 1-deoxy-D-xylulose 5-phosphate = pyridoxine 5'-phosphate + phosphate + 2 H2O + H(+). Its pathway is cofactor biosynthesis; pyridoxine 5'-phosphate biosynthesis; pyridoxine 5'-phosphate from D-erythrose 4-phosphate: step 5/5. In terms of biological role, catalyzes the complicated ring closure reaction between the two acyclic compounds 1-deoxy-D-xylulose-5-phosphate (DXP) and 3-amino-2-oxopropyl phosphate (1-amino-acetone-3-phosphate or AAP) to form pyridoxine 5'-phosphate (PNP) and inorganic phosphate. The sequence is that of Pyridoxine 5'-phosphate synthase from Xylella fastidiosa (strain M12).